We begin with the raw amino-acid sequence, 328 residues long: Ferredoxin--NADP reductase 2 (328 aa).

FAD-binding residues include T16, E35, Q43, Y48, I88, F123, D284, and T325.

It belongs to the ferredoxin--NADP reductase type 2 family. In terms of assembly, homodimer. FAD is required as a cofactor.

The enzyme catalyses 2 reduced [2Fe-2S]-[ferredoxin] + NADP(+) + H(+) = 2 oxidized [2Fe-2S]-[ferredoxin] + NADPH. This Oceanobacillus iheyensis (strain DSM 14371 / CIP 107618 / JCM 11309 / KCTC 3954 / HTE831) protein is Ferredoxin--NADP reductase 2.